Here is a 169-residue protein sequence, read N- to C-terminus: NADH-quinone oxidoreductase subunit I (169 aa).

2 4Fe-4S ferredoxin-type domains span residues 60–90 and 100–129; these read LRRY…IEAE and TRYD…EGPN. Positions 70, 73, 76, 80, 109, 112, 115, and 119 each coordinate [4Fe-4S] cluster.

Belongs to the complex I 23 kDa subunit family. In terms of assembly, NDH-1 is composed of 14 different subunits. Subunits NuoA, H, J, K, L, M, N constitute the membrane sector of the complex. It depends on [4Fe-4S] cluster as a cofactor.

It is found in the cell membrane. It catalyses the reaction a quinone + NADH + 5 H(+)(in) = a quinol + NAD(+) + 4 H(+)(out). Its function is as follows. NDH-1 shuttles electrons from NADH, via FMN and iron-sulfur (Fe-S) centers, to quinones in the respiratory chain. The immediate electron acceptor for the enzyme in this species is believed to be ubiquinone. Couples the redox reaction to proton translocation (for every two electrons transferred, four hydrogen ions are translocated across the cytoplasmic membrane), and thus conserves the redox energy in a proton gradient. The chain is NADH-quinone oxidoreductase subunit I from Wolbachia pipientis wMel.